A 142-amino-acid chain; its full sequence is Salivary protein 15a (142 aa).

The first 20 residues, 1–20 (MKYLGLALISAVFLIGACQA), serve as a signal peptide directing secretion. Disulfide bonds link cysteine 27/cysteine 44, cysteine 40/cysteine 108, and cysteine 91/cysteine 117.

The protein belongs to the PBP/GOBP family. In terms of tissue distribution, female salivary gland (at protein level).

The protein resides in the secreted. Its function is as follows. Inhibits contact coagulation pathway activation in the host by sequestering anionic polymers, such as polyphosphate and dextran sulfate, and thus blocking interaction of protein components of the pathway with negatively charged surfaces. Inhibits dextran sulfate-mediated autoactivation of host coagulation factor XII (F12). Inhibits dextran sulfate-mediated autoactivation of host factor XI (F11). Inhibits polyphosphate-mediated activation of host F11 by thrombin (F2). May inhibit dextran sulfate-mediated bradykinin generation in host plasma. The protein is Salivary protein 15a of Phlebotomus duboscqi (Sandfly).